We begin with the raw amino-acid sequence, 541 residues long: Sorting nexin-27 (541 aa).

Residues 1–26 (MADEDGEGIHPAAPHRNGGGGGGGGS) are disordered. Residues 17–26 (NGGGGGGGGS) show a composition bias toward gly residues. The PDZ domain maps to 43–136 (VVRIVKSESG…ELILTVLSVP (94 aa)). Residues Ser-51 and Ser-62 each carry the phosphoserine modification. The region spanning 161 to 269 (QAVPISVPTY…EFLSESDENY (109 aa)) is the PX domain. A Ras-associating domain is found at 273 to 362 (SDVELRVALP…TCLTIRKWLF (90 aa)). Residues 273 to 362 (SDVELRVALP…TCLTIRKWLF (90 aa)) form an FERM-like region F1 region. Residues 373–421 (NDLAVTYFFHQAVDDVKKGYIKAEEKSYQLQKLYEQRKMVMYLNMLRTC) are FERM-like region F2. Positions 425–525 (NEIIFPHCAC…RVFCELKWRK (101 aa)) are FERM-like region F3.

Core component of the SNX27-retromer, a multiprotein complex composed of SNX27, the WASH complex and the retromer complex. Interacts (via PDZ domain) with a number of target transmembrane proteins (via PDZ-binding motif): ABCC4, ADRB2, ARHGEF7, GRIA1, GRIA2, GRIN1, GRIN2A GRIN2C, KCNJ6, KCNJ9 and SLC2A1/GLUT1. Interacts (via the FERM-like regions) with the WASH complex. Interacts with SNX1. Interacts with CYTIP. Interacts with DGKZ. Interacts with MCC. Interacts (via PDZ domains) with SLC9A3; directs SLC9A3 membrane insertion from early endosomes to the plasma membrane.

Its subcellular location is the early endosome membrane. The protein localises to the cytoplasm. The protein resides in the cytosol. Its function is as follows. Involved in the retrograde transport from endosome to plasma membrane, a trafficking pathway that promotes the recycling of internalized transmembrane proteins. Following internalization, endocytosed transmembrane proteins are delivered to early endosomes and recycled to the plasma membrane instead of being degraded in lysosomes. SNX27 specifically binds and directs sorting of a subset of transmembrane proteins containing a PDZ-binding motif at the C-terminus: following interaction with target transmembrane proteins, associates with the retromer complex, preventing entry into the lysosomal pathway, and promotes retromer-tubule based plasma membrane recycling. SNX27 also binds with the WASH complex. Interacts with membranes containing phosphatidylinositol-3-phosphate (PtdIns(3P)). May participate in establishment of natural killer cell polarity. Recruits CYTIP to early endosomes. The sequence is that of Sorting nexin-27 (SNX27) from Bos taurus (Bovine).